A 294-amino-acid chain; its full sequence is Bifunctional protein FolD (294 aa).

NADP(+)-binding positions include 176-178, S201, and I242; that span reads GAS.

The protein belongs to the tetrahydrofolate dehydrogenase/cyclohydrolase family. Homodimer.

The enzyme catalyses (6R)-5,10-methylene-5,6,7,8-tetrahydrofolate + NADP(+) = (6R)-5,10-methenyltetrahydrofolate + NADPH. It carries out the reaction (6R)-5,10-methenyltetrahydrofolate + H2O = (6R)-10-formyltetrahydrofolate + H(+). It functions in the pathway one-carbon metabolism; tetrahydrofolate interconversion. Functionally, catalyzes the oxidation of 5,10-methylenetetrahydrofolate to 5,10-methenyltetrahydrofolate and then the hydrolysis of 5,10-methenyltetrahydrofolate to 10-formyltetrahydrofolate. This Bordetella petrii (strain ATCC BAA-461 / DSM 12804 / CCUG 43448) protein is Bifunctional protein FolD.